Consider the following 260-residue polypeptide: MLFPRVVPFQSLRTAFQKKTFLPVSSAGNVFTPRFQLQAIRSIWIRSEETPNENALKFLPGLDILPPTIGSCEFMRGQGTVNSPLAQKLFDIDGVDSIFFGKDFITVSKGAGTEWAQMKPEVFSVIMEHLSNGSPVLSEEPLKGASDTQILESDSQIVAMIKELIETSIRPSIQEDGGDVEFRGFDEKTGTVSLKLRGACRTCSSSAVTLKNGIQQMLKHYIPEVENVVQVLDPEEEVAIAEFEKFEQRINGNKQKADNK.

The segment at 161–231 (IKELIETSIR…IPEVENVVQV (71 aa)) is nifU.

It belongs to the NifU family.

This is NifU-like protein C1709.19c from Schizosaccharomyces pombe (strain 972 / ATCC 24843) (Fission yeast).